The following is a 180-amino-acid chain: ATP synthase subunit delta (180 aa).

Belongs to the ATPase delta chain family. As to quaternary structure, F-type ATPases have 2 components, F(1) - the catalytic core - and F(0) - the membrane proton channel. F(1) has five subunits: alpha(3), beta(3), gamma(1), delta(1), epsilon(1). F(0) has three main subunits: a(1), b(2) and c(10-14). The alpha and beta chains form an alternating ring which encloses part of the gamma chain. F(1) is attached to F(0) by a central stalk formed by the gamma and epsilon chains, while a peripheral stalk is formed by the delta and b chains.

Its subcellular location is the cell membrane. F(1)F(0) ATP synthase produces ATP from ADP in the presence of a proton or sodium gradient. F-type ATPases consist of two structural domains, F(1) containing the extramembraneous catalytic core and F(0) containing the membrane proton channel, linked together by a central stalk and a peripheral stalk. During catalysis, ATP synthesis in the catalytic domain of F(1) is coupled via a rotary mechanism of the central stalk subunits to proton translocation. Its function is as follows. This protein is part of the stalk that links CF(0) to CF(1). It either transmits conformational changes from CF(0) to CF(1) or is implicated in proton conduction. The polypeptide is ATP synthase subunit delta (Caldicellulosiruptor bescii (strain ATCC BAA-1888 / DSM 6725 / KCTC 15123 / Z-1320) (Anaerocellum thermophilum)).